A 29-amino-acid chain; its full sequence is TIIGAPCRKCEHLDRSGNCVRDWSCGQEV.

Threonine 1 carries O-linked (GlcNAc...) threonine glycosylation. Disulfide bonds link cysteine 7/cysteine 19 and cysteine 10/cysteine 25.

The protein belongs to the sea anemone BBH family.

The protein resides in the secreted. It localises to the nematocyst. This Homostichanthus duerdeni (Sea anemone) protein is U-homostoxin-Hdu1a.